The sequence spans 114 residues: Ribonuclease P protein component (114 aa).

It belongs to the RnpA family. As to quaternary structure, consists of a catalytic RNA component (M1 or rnpB) and a protein subunit.

It catalyses the reaction Endonucleolytic cleavage of RNA, removing 5'-extranucleotides from tRNA precursor.. Its function is as follows. RNaseP catalyzes the removal of the 5'-leader sequence from pre-tRNA to produce the mature 5'-terminus. It can also cleave other RNA substrates such as 4.5S RNA. The protein component plays an auxiliary but essential role in vivo by binding to the 5'-leader sequence and broadening the substrate specificity of the ribozyme. This is Ribonuclease P protein component from Alkaliphilus oremlandii (strain OhILAs) (Clostridium oremlandii (strain OhILAs)).